The chain runs to 249 residues: Electron transfer flavoprotein subunit beta (249 aa).

Belongs to the ETF beta-subunit/FixA family. Heterodimer of an alpha and a beta subunit. It depends on FAD as a cofactor. AMP is required as a cofactor.

In terms of biological role, the electron transfer flavoprotein serves as a specific electron acceptor for other dehydrogenases. It transfers the electrons to the main respiratory chain via ETF-ubiquinone oxidoreductase (ETF dehydrogenase). The sequence is that of Electron transfer flavoprotein subunit beta (etfB) from Bradyrhizobium diazoefficiens (strain JCM 10833 / BCRC 13528 / IAM 13628 / NBRC 14792 / USDA 110).